We begin with the raw amino-acid sequence, 383 residues long: NifS-like protein (383 aa).

Pyridoxal 5'-phosphate-binding positions include 58–59 (SE) and 184–186 (SIN).

The protein belongs to the class-V pyridoxal-phosphate-dependent aminotransferase family. NifS/IscS subfamily. It depends on pyridoxal 5'-phosphate as a cofactor.

The protein localises to the virion. This African swine fever virus (strain Badajoz 1971 Vero-adapted) (Ba71V) protein is NifS-like protein.